A 494-amino-acid polypeptide reads, in one-letter code: Alpha-amylase 1 (494 aa).

An N-terminal signal peptide occupies residues 1 to 18 (MFLAKSIVCLALLAVANA). A disulfide bond links Cys-46 and Cys-102. Positions 116, 165, and 174 each coordinate Ca(2+). Cys-153 and Cys-167 form a disulfide bridge. Arg-202 is a chloride binding site. Residue Asp-204 is the Nucleophile of the active site. Residue His-208 participates in Ca(2+) binding. Residue Glu-241 is the Proton donor of the active site. Residues Asn-304 and Arg-343 each coordinate chloride. The interval 350 to 370 (FTDTDQGPPTTDGQNIASPSF) is disordered. Over residues 351-363 (TDTDQGPPTTDGQ) the composition is skewed to low complexity. Intrachain disulfides connect Cys-376/Cys-382 and Cys-448/Cys-460.

It belongs to the glycosyl hydrolase 13 family. In terms of assembly, monomer. It depends on Ca(2+) as a cofactor. Chloride is required as a cofactor.

The catalysed reaction is Endohydrolysis of (1-&gt;4)-alpha-D-glucosidic linkages in polysaccharides containing three or more (1-&gt;4)-alpha-linked D-glucose units.. This chain is Alpha-amylase 1 (Amy35), found in Drosophila ananassae (Fruit fly).